We begin with the raw amino-acid sequence, 449 residues long: Phosphoglucosamine mutase (449 aa).

Catalysis depends on Ser104, which acts as the Phosphoserine intermediate. Residues Ser104, Asp243, Asp245, and Asp247 each coordinate Mg(2+). Ser104 carries the post-translational modification Phosphoserine.

This sequence belongs to the phosphohexose mutase family. It depends on Mg(2+) as a cofactor. Activated by phosphorylation.

It catalyses the reaction alpha-D-glucosamine 1-phosphate = D-glucosamine 6-phosphate. In terms of biological role, catalyzes the conversion of glucosamine-6-phosphate to glucosamine-1-phosphate. The sequence is that of Phosphoglucosamine mutase from Xanthomonas axonopodis pv. citri (strain 306).